The sequence spans 237 residues: Purine nucleoside phosphorylase DeoD-type (237 aa).

Residue histidine 4 coordinates a purine D-ribonucleoside. Phosphate-binding positions include glycine 20, arginine 24, arginine 43, and 87–90 (RVGT). A purine D-ribonucleoside contacts are provided by residues 179–181 (EME) and 203–204 (SD). Aspartate 204 serves as the catalytic Proton donor.

The protein belongs to the PNP/UDP phosphorylase family. In terms of assembly, homohexamer; trimer of homodimers.

It carries out the reaction a purine D-ribonucleoside + phosphate = a purine nucleobase + alpha-D-ribose 1-phosphate. The enzyme catalyses a purine 2'-deoxy-D-ribonucleoside + phosphate = a purine nucleobase + 2-deoxy-alpha-D-ribose 1-phosphate. In terms of biological role, catalyzes the reversible phosphorolytic breakdown of the N-glycosidic bond in the beta-(deoxy)ribonucleoside molecules, with the formation of the corresponding free purine bases and pentose-1-phosphate. This is Purine nucleoside phosphorylase DeoD-type from Streptococcus pyogenes serotype M5 (strain Manfredo).